The sequence spans 469 residues: 3-isopropylmalate dehydratase large subunit (469 aa).

[4Fe-4S] cluster contacts are provided by Cys347, Cys408, and Cys411.

It belongs to the aconitase/IPM isomerase family. LeuC type 1 subfamily. In terms of assembly, heterodimer of LeuC and LeuD. [4Fe-4S] cluster serves as cofactor.

It catalyses the reaction (2R,3S)-3-isopropylmalate = (2S)-2-isopropylmalate. The protein operates within amino-acid biosynthesis; L-leucine biosynthesis; L-leucine from 3-methyl-2-oxobutanoate: step 2/4. Its function is as follows. Catalyzes the isomerization between 2-isopropylmalate and 3-isopropylmalate, via the formation of 2-isopropylmaleate. The polypeptide is 3-isopropylmalate dehydratase large subunit (Haemophilus influenzae (strain 86-028NP)).